A 549-amino-acid chain; its full sequence is Cytoplasmic trehalase (549 aa).

Residues R168, 175-176 (WD), N212, 221-223 (RSQ), 292-294 (RDE), and G324 contribute to the substrate site. Active-site proton donor/acceptor residues include D326 and E509. Residue E525 participates in substrate binding.

Belongs to the glycosyl hydrolase 37 family. Monomer.

It is found in the cytoplasm. It catalyses the reaction alpha,alpha-trehalose + H2O = alpha-D-glucose + beta-D-glucose. The protein operates within glycan degradation; trehalose degradation; D-glucose from alpha,alpha-trehalose: step 1/1. Functionally, hydrolyzes trehalose to glucose. Could be involved, in cells returning to low osmolarity conditions, in the utilization of the accumulated cytoplasmic trehalose, which was synthesized in response to high osmolarity. In Shigella flexneri serotype 5b (strain 8401), this protein is Cytoplasmic trehalase.